We begin with the raw amino-acid sequence, 361 residues long: Holliday junction branch migration complex subunit RuvB (361 aa).

A disordered region spans residues 1 to 21; sequence MHKDEDQRLLGAVPLPNDPDR. The segment at 1 to 184 is large ATPase domain (RuvB-L); sequence MHKDEDQRLL…FGIPIRLNFY (184 aa). ATP-binding positions include Leu23, Arg24, Gly65, Lys68, Thr69, Thr70, 131–133, Arg174, Tyr184, and Arg221; that span reads EDY. Thr69 serves as a coordination point for Mg(2+). The segment at 185–255 is small ATPAse domain (RuvB-S); that stretch reads TIEELEYIVQ…IADEALSRLE (71 aa). The head domain (RuvB-H) stretch occupies residues 258–361; sequence HLGLDPLDRR…QTVLWDEADD (104 aa). The DNA site is built by Arg294, Arg313, and Arg318.

Belongs to the RuvB family. As to quaternary structure, homohexamer. Forms an RuvA(8)-RuvB(12)-Holliday junction (HJ) complex. HJ DNA is sandwiched between 2 RuvA tetramers; dsDNA enters through RuvA and exits via RuvB. An RuvB hexamer assembles on each DNA strand where it exits the tetramer. Each RuvB hexamer is contacted by two RuvA subunits (via domain III) on 2 adjacent RuvB subunits; this complex drives branch migration. In the full resolvosome a probable DNA-RuvA(4)-RuvB(12)-RuvC(2) complex forms which resolves the HJ.

The protein resides in the cytoplasm. The enzyme catalyses ATP + H2O = ADP + phosphate + H(+). The RuvA-RuvB-RuvC complex processes Holliday junction (HJ) DNA during genetic recombination and DNA repair, while the RuvA-RuvB complex plays an important role in the rescue of blocked DNA replication forks via replication fork reversal (RFR). RuvA specifically binds to HJ cruciform DNA, conferring on it an open structure. The RuvB hexamer acts as an ATP-dependent pump, pulling dsDNA into and through the RuvAB complex. RuvB forms 2 homohexamers on either side of HJ DNA bound by 1 or 2 RuvA tetramers; 4 subunits per hexamer contact DNA at a time. Coordinated motions by a converter formed by DNA-disengaged RuvB subunits stimulates ATP hydrolysis and nucleotide exchange. Immobilization of the converter enables RuvB to convert the ATP-contained energy into a lever motion, pulling 2 nucleotides of DNA out of the RuvA tetramer per ATP hydrolyzed, thus driving DNA branch migration. The RuvB motors rotate together with the DNA substrate, which together with the progressing nucleotide cycle form the mechanistic basis for DNA recombination by continuous HJ branch migration. Branch migration allows RuvC to scan DNA until it finds its consensus sequence, where it cleaves and resolves cruciform DNA. This Bartonella henselae (strain ATCC 49882 / DSM 28221 / CCUG 30454 / Houston 1) (Rochalimaea henselae) protein is Holliday junction branch migration complex subunit RuvB.